We begin with the raw amino-acid sequence, 263 residues long: Lens fiber major intrinsic protein (263 aa).

Residues 1–12 (MWELRSASFWRA) lie on the Cytoplasmic side of the membrane. The helical transmembrane segment at 13-30 (IFAEFFATLFYVFFGLGA) threads the bilayer. Over 31–40 (SLRWAPGPLH) the chain is Extracellular. Residues 41–59 (VLQVALAFGLALATLVQAV) form a helical membrane-spanning segment. Residues 60–63 (GHIS) are Cytoplasmic-facing. Positions 64-76 (GAHVNPAVTFAFL) form an intramembrane region, discontinuously helical. The NPA 1 motif lies at 68-70 (NPA). The Cytoplasmic segment spans residues 77–85 (VGSQMSLLR). The helical transmembrane segment at 86 to 106 (AICYVVAQLLGAVAGAAVLYS) threads the bilayer. At 107–126 (VTPPAVRGNLALNTLHPGVS) the chain is on the extracellular side. A helical membrane pass occupies residues 127 to 147 (VGQATIVEIFLTLQFVLCIFA). The Cytoplasmic segment spans residues 148 to 157 (TYDERRNGRL). Residues 158-175 (GSVALAVGFSLTLGHLFG) form a helical membrane-spanning segment. At 176-177 (MY) the chain is on the extracellular side. Residues 178-193 (YTGAGMNPARSFAPAI) constitute an intramembrane region (discontinuously helical). Residues 184–186 (NPA) carry the NPA 2 motif. Over 194 to 200 (LTRNFTN) the chain is Extracellular. The chain crosses the membrane as a helical span at residues 201-218 (HWVYWVGPVIGAGLGSLL). The Cytoplasmic portion of the chain corresponds to 219-263 (YDFLLFPRLKSVSERLSILKGTRPSESNGQPEVTGEPVELKTQAL). The segment at 227–237 (LKSVSERLSIL) is interaction with CALM. Ser235, Ser243, and Ser245 each carry phosphoserine. The disordered stretch occupies residues 240–263 (TRPSESNGQPEVTGEPVELKTQAL).

The protein belongs to the MIP/aquaporin (TC 1.A.8) family. Homotetramer; each monomer provides an independent water pore. Two homotetramers on opposing membranes can dimerize, forming a cell-cell junction. Interacts with CALM; the calcium-calmodulin/CALM complex interacts with the cytoplasmic domains of two aquaporins, leading to channel closure. Interacts with BFSP1 (via C-terminus); prevents calcium-dependent inhibition of the water channel activity. Post-translationally, subject to partial proteolytic cleavage in the eye lens core. Partial proteolysis promotes interactions between tetramers from adjoining membranes. Fatty acylated at Met-1 and Lys-238. The acyl modifications, in decreasing order of ion abundance, are: oleoyl (C18:1) &gt; palmitoyl (C16:0) &gt; stearoyl (C18:0) &gt; eicosenoyl (C20:1) &gt; dihomo-gamma-linolenoyl (C20:3) &gt; palmitoleoyl (C16:1) &gt; eicosadienoyl (C20:2). Detected in eye lens (at protein level).

The protein resides in the cell membrane. Its subcellular location is the cell junction. It catalyses the reaction H2O(in) = H2O(out). With respect to regulation, the water channel activity is inhibited by calcium through calmodulin/CALM. Aquaporins form homotetrameric transmembrane channels, with each monomer independently mediating water transport across the plasma membrane along its osmotic gradient. Specifically expressed in lens fiber cells, this aquaporin is crucial for maintaining lens water homeostasis and transparency. Beyond water permeability, it also acts as a cell-to-cell adhesion molecule, forming thin junctions between lens fiber cells that are essential for maintaining the ordered structure and transparency of the lens. This chain is Lens fiber major intrinsic protein, found in Ovis aries (Sheep).